The chain runs to 170 residues: RxLR effector protein PITG_07555 (170 aa).

The N-terminal stretch at 1 to 17 (MQAYHLLLVCMYISCSA) is a signal peptide. A RxLR-dEER motif is present at residues 50–62 (RALRTHNPDREER).

The protein belongs to the RxLR effector family.

Its subcellular location is the secreted. The protein resides in the host cytoplasm. It is found in the host nucleus. In terms of biological role, effector that enhances P.infestans colonization of Nicotiana benthamiana leaves. The protein is RxLR effector protein PITG_07555 of Phytophthora infestans (strain T30-4) (Potato late blight agent).